We begin with the raw amino-acid sequence, 92 residues long: Conotoxin Cal22f (92 aa).

The first 24 residues, 1–24, serve as a signal peptide directing secretion; sequence MMSTKGITLFLCLLLLALATSVNG. Positions 25–44 are excised as a propeptide; that stretch reads GQGTRRSRMTRALHGGRPSA.

Contains 4 disulfide bonds. Expressed by the venom duct.

The protein resides in the secreted. Functionally, probable neurotoxin with unknown target. Possibly targets ion channels. This chain is Conotoxin Cal22f, found in Californiconus californicus (California cone).